The chain runs to 110 residues: Small ribosomal subunit protein bS16 (110 aa).

Residues 84–110 (KREARNNPEKAVPRKERKAAAEAAAKK) form a disordered region.

This sequence belongs to the bacterial ribosomal protein bS16 family.

The sequence is that of Small ribosomal subunit protein bS16 from Rhodopseudomonas palustris (strain BisB18).